The primary structure comprises 446 residues: Tubulin beta-2 chain (446 aa).

The GTP site is built by Gln11, Glu69, Ser138, Gly142, Thr143, Gly144, Asn204, and Asn226. Glu69 provides a ligand contact to Mg(2+). Positions 424–446 (QYQEATADEEGEFDEDEEGGGDE) are disordered. Residues 429–446 (TADEEGEFDEDEEGGGDE) are compositionally biased toward acidic residues.

Belongs to the tubulin family. As to quaternary structure, dimer of alpha and beta chains. A typical microtubule is a hollow water-filled tube with an outer diameter of 25 nm and an inner diameter of 15 nM. Alpha-beta heterodimers associate head-to-tail to form protofilaments running lengthwise along the microtubule wall with the beta-tubulin subunit facing the microtubule plus end conferring a structural polarity. Microtubules usually have 13 protofilaments but different protofilament numbers can be found in some organisms and specialized cells. Mg(2+) serves as cofactor.

Its subcellular location is the cytoplasm. The protein localises to the cytoskeleton. Functionally, tubulin is the major constituent of microtubules, a cylinder consisting of laterally associated linear protofilaments composed of alpha- and beta-tubulin heterodimers. Microtubules grow by the addition of GTP-tubulin dimers to the microtubule end, where a stabilizing cap forms. Below the cap, tubulin dimers are in GDP-bound state, owing to GTPase activity of alpha-tubulin. This Drosophila erecta (Fruit fly) protein is Tubulin beta-2 chain (betaTub85D).